The chain runs to 688 residues: Methionine--tRNA ligase (688 aa).

The short motif at 13–23 is the 'HIGH' region element; that stretch reads PYANGNFHIGH. Positions 144, 147, 157, and 160 each coordinate Zn(2+). The 'KMSKS' region motif lies at 342–346; sequence KMSKS. K345 serves as a coordination point for ATP. The tRNA-binding domain occupies 582–688; it reads DFAKVDLRIA…PGAQPGMRIH (107 aa).

It belongs to the class-I aminoacyl-tRNA synthetase family. MetG type 1 subfamily. In terms of assembly, homodimer. Zn(2+) is required as a cofactor.

The protein localises to the cytoplasm. It carries out the reaction tRNA(Met) + L-methionine + ATP = L-methionyl-tRNA(Met) + AMP + diphosphate. Is required not only for elongation of protein synthesis but also for the initiation of all mRNA translation through initiator tRNA(fMet) aminoacylation. The chain is Methionine--tRNA ligase from Acidovorax sp. (strain JS42).